We begin with the raw amino-acid sequence, 629 residues long: RNA polymerase sigma factor RpoD (629 aa).

The interval 183–228 (HNGLDEDFSDEDDEEESSNADVEDNEDEEDNESESTSDSSDSDNSI) is disordered. The segment covering 187–228 (DEDFSDEDDEEESSNADVEDNEDEEDNESESTSDSSDSDNSI) has biased composition (acidic residues). The interval 395–465 (MVEANLRLVI…TRSIADQART (71 aa)) is sigma-70 factor domain-2. The Interaction with polymerase core subunit RpoC signature appears at 419 to 422 (DLIQ). A sigma-70 factor domain-3 region spans residues 474–550 (ETINKLNRIS…DSTLELPLDS (77 aa)). The interval 563–616 (VLEGLTPREAKVLRMRFGIDMNTDHTLEEVGKQFDVTRERIRQIEAKALRKLRH) is sigma-70 factor domain-4. The segment at residues 589 to 608 (LEEVGKQFDVTRERIRQIEA) is a DNA-binding region (H-T-H motif).

This sequence belongs to the sigma-70 factor family. RpoD/SigA subfamily. Interacts transiently with the RNA polymerase catalytic core.

Its subcellular location is the cytoplasm. Sigma factors are initiation factors that promote the attachment of RNA polymerase to specific initiation sites and are then released. This sigma factor is the primary sigma factor during exponential growth. In Haemophilus influenzae (strain ATCC 51907 / DSM 11121 / KW20 / Rd), this protein is RNA polymerase sigma factor RpoD.